Consider the following 242-residue polypeptide: tRNA (guanine-N(1)-)-methyltransferase (242 aa).

S-adenosyl-L-methionine-binding positions include Gly109 and 129–134; that span reads LGDFVL.

It belongs to the RNA methyltransferase TrmD family. As to quaternary structure, homodimer.

The protein resides in the cytoplasm. The catalysed reaction is guanosine(37) in tRNA + S-adenosyl-L-methionine = N(1)-methylguanosine(37) in tRNA + S-adenosyl-L-homocysteine + H(+). Its function is as follows. Specifically methylates guanosine-37 in various tRNAs. In Exiguobacterium sibiricum (strain DSM 17290 / CCUG 55495 / CIP 109462 / JCM 13490 / 255-15), this protein is tRNA (guanine-N(1)-)-methyltransferase.